The sequence spans 1480 residues: Nonribosomal peptide synthetase-like enzyme fsqF (1480 aa).

A disordered region spans residues Ser-31–Arg-59. The adenylation domain stretch occupies residues Asp-132–Tyr-527. The Carrier domain occupies Ser-662–Ser-741. Ser-700 is modified (O-(pantetheine 4'-phosphoryl)serine). Positions Ala-739–Thr-754 are enriched in polar residues. Residues Ala-739–Arg-773 are disordered. The NAD-binding domain stretch occupies residues Leu-780–Gly-1003. An aminotransferase domain region spans residues Asn-1100 to Phe-1465.

Belongs to the NRP synthetase family.

It participates in secondary metabolite biosynthesis. Nonribosomal peptide synthetase-like enzyme; part of the gene cluster that mediates the biosynthesis of the isoquinoline alkaloids fumisoquin A, fumisoquin B and fumisoquin C; as well as small amounts of fumipyrrole as a shunt metabolite. The products of the cluster lead to a brown coloration and are important for growth and conidiation. The nonribosomal peptide synthetase-like protein fsqF, which lacks a canonical condensation domain, is required for addition of a serine-derived dehydroalanine moiety to activated tyrosine but is not essential for the subsequent steps leading to isoquinoline formation. A different enzyme, most likely the ATP-grasp enzyme fsqD, is responsible for activation of tyrosine. Three additional enzymes encoded by the fsq cluster, the N-methyltransferase fsqC, the phenol 2-monooxygenase fsqG and the FAD-dependent oxidase fsqB, catalyze the formation of the isoquinoline ring system in the fumisoquins. FsqB converts the fspF thiolation domain-bound (2S,4S,5S)-2-amino-6-(3,4-dihydroxyphenyl)-4-hydroxy-5-(methylamino)hexanoyl into isoquinoline. The cyclization most likely proceeds via a two-step mechanism, beginning with FAD-dependent oxidation of the methyl group to an iminium species followed by electrophilic attack on the deprotonated phenol. The polypeptide is Nonribosomal peptide synthetase-like enzyme fsqF (Aspergillus fumigatus (strain ATCC MYA-4609 / CBS 101355 / FGSC A1100 / Af293) (Neosartorya fumigata)).